A 597-amino-acid chain; its full sequence is Aspartate--tRNA ligase (597 aa).

Glutamate 171 serves as a coordination point for L-aspartate. The aspartate stretch occupies residues 195–198; sequence QLFK. Arginine 217 provides a ligand contact to L-aspartate. Residues 217–219 and glutamine 226 each bind ATP; that span reads RDE. Histidine 448 provides a ligand contact to L-aspartate. Glutamate 482 is a binding site for ATP. Residue arginine 489 participates in L-aspartate binding. 534–537 provides a ligand contact to ATP; sequence GLDR.

It belongs to the class-II aminoacyl-tRNA synthetase family. Type 1 subfamily. Homodimer.

It localises to the cytoplasm. The catalysed reaction is tRNA(Asp) + L-aspartate + ATP = L-aspartyl-tRNA(Asp) + AMP + diphosphate. Functionally, catalyzes the attachment of L-aspartate to tRNA(Asp) in a two-step reaction: L-aspartate is first activated by ATP to form Asp-AMP and then transferred to the acceptor end of tRNA(Asp). This Photobacterium profundum (strain SS9) protein is Aspartate--tRNA ligase.